Reading from the N-terminus, the 193-residue chain is dCTP deaminase, dUMP-forming (193 aa).

DCTP contacts are provided by residues 101-106 (KSSLGR), Asp119, 127-129 (TLE), Gln148, Tyr162, and Gln174. The active-site Proton donor/acceptor is Glu129.

This sequence belongs to the dCTP deaminase family. As to quaternary structure, homotrimer.

It carries out the reaction dCTP + 2 H2O = dUMP + NH4(+) + diphosphate. It functions in the pathway pyrimidine metabolism; dUMP biosynthesis; dUMP from dCTP: step 1/1. Its function is as follows. Bifunctional enzyme that catalyzes both the deamination of dCTP to dUTP and the hydrolysis of dUTP to dUMP without releasing the toxic dUTP intermediate. The sequence is that of dCTP deaminase, dUMP-forming from Bifidobacterium adolescentis (strain ATCC 15703 / DSM 20083 / NCTC 11814 / E194a).